A 209-amino-acid chain; its full sequence is Transcription factor 23 (209 aa).

2 disordered regions span residues 1 to 20 and 54 to 85; these read MSQEATEAPAMPGEGHGHNK and LSRATSAPRGTRARGTAHGRSEASPENAARER. Over residues 72-85 the composition is skewed to basic and acidic residues; that stretch reads GRSEASPENAARER. The bHLH domain occupies 75–127; sequence EASPENAARERTRVKTLRQAFLALQAALPAVPPDTKLSKLDVLVLATSYIAHL.

In terms of assembly, forms inactive heterodimeric complex with TCF3. Highly expressed in the uterus (predominantly in myometrium), ovary, and testis. Expression in the uterus is higher in the diestrus phase than in the estrus phase and reaches a maximum at 7.5 dpc. Expression declines towards the time of delivery and returns to the non-pregnant level 4 days after delivery. Low expression seen in lung, heart, intestine, and spleen.

The protein resides in the nucleus. Functionally, inhibits E-box-mediated binding and transactivation of bHLH factors. Inhibitory effect is similar to that of ID proteins. Inhibits the formation of TCF3 and MYOD1 homodimers and heterodimers. Lacks DNA binding activity. May be involved in the regulation or modulation of smooth muscle contraction of the uterus during pregnancy and particularly around the time of delivery. Seems to play a role in the inhibition of myogenesis. In Mus musculus (Mouse), this protein is Transcription factor 23 (Tcf23).